The primary structure comprises 281 residues: Sulfur carrier protein FdhD (281 aa).

Cys117 acts as the Cysteine persulfide intermediate in catalysis.

Belongs to the FdhD family.

It localises to the cytoplasm. Required for formate dehydrogenase (FDH) activity. Acts as a sulfur carrier protein that transfers sulfur from IscS to the molybdenum cofactor prior to its insertion into FDH. The chain is Sulfur carrier protein FdhD from Xanthomonas axonopodis pv. citri (strain 306).